The following is a 569-amino-acid chain: Neutral leucine aminopeptidase, chloroplastic (569 aa).

The transit peptide at 1–48 (MNGVLCSSSSSFHSYPSIFTKFQSSPIWSFSISVTPLCSRRAKRMAHS) directs the protein to the chloroplast. Positions 339 and 344 each coordinate Mn(2+). The active site involves Lys-351. 3 residues coordinate Mn(2+): Asp-364, Asp-424, and Glu-426. The active site involves Arg-428.

It belongs to the peptidase M17 family. As to quaternary structure, homohexamer (dimer of homotrimers). The cofactor is Mn(2+). As to expression, expressed constitutively at low levels. Expressed in vegetative and reproductive organs, including leaves, stems, roots, cotyledons (after imbibition), pistils, sepals, petals, stamens, and floral buds (at protein level). Present at very low levels in healthy leaves.

The protein localises to the plastid. It localises to the chloroplast. The enzyme catalyses Release of an N-terminal amino acid, Xaa-|-Yaa-, in which Xaa is preferably Leu, but may be other amino acids including Pro although not Arg or Lys, and Yaa may be Pro. Amino acid amides and methyl esters are also readily hydrolyzed, but rates on arylamides are exceedingly low.. It carries out the reaction Release of N-terminal proline from a peptide.. Functionally, catalyzes the removal of unsubstituted N-terminal amino acids from various peptides. When associated as homohexamer, catalyzes the proteolyzes of Xaa-Leu dipeptides. Possesses leucine aminopeptidase activity against the model substrate leucine-amido methyl coumarin. Presumably involved in the processing and regular turnover of intracellular proteins. In terms of biological role, functions as a molecular chaperone to protect proteins from heat-induced damage. This chain is Neutral leucine aminopeptidase, chloroplastic, found in Solanum lycopersicum (Tomato).